We begin with the raw amino-acid sequence, 346 residues long: MANAYKQAGVDIEAGYEAVSRMKKHVQTTMRKEVLGGLGGFGGMFDLSKFALEEPVLVSGTDGVGTKLMLAFMADKHDTIGIDAVAMCVNDIVVQGAEPLFFLDYIACGKAEPSKIENIVKGISEGCRQAGCALIGGETAEMPGMYSTEEYDLAGFTVGIVDKKKIVTGEKIEAGHVLIGLASSGIHSNGYSLVRKVLLEDGELSLDRIYGRLELPLGEELLKPTKIYVKPILELLKKHEVYGMAHITGGGFIENIPRMLPEGIGAEIELGSWQVQPIFSLLQEVGKLEEKEMFNIFNMGIGMVVAVKEEEAKDIVRLLEEQGEKAHIIGHTVQGSGVTFIEGTEV.

Belongs to the AIR synthase family.

Its subcellular location is the cytoplasm. It carries out the reaction 2-formamido-N(1)-(5-O-phospho-beta-D-ribosyl)acetamidine + ATP = 5-amino-1-(5-phospho-beta-D-ribosyl)imidazole + ADP + phosphate + H(+). Its pathway is purine metabolism; IMP biosynthesis via de novo pathway; 5-amino-1-(5-phospho-D-ribosyl)imidazole from N(2)-formyl-N(1)-(5-phospho-D-ribosyl)glycinamide: step 2/2. This is Phosphoribosylformylglycinamidine cyclo-ligase from Bacillus mycoides (strain KBAB4) (Bacillus weihenstephanensis).